Reading from the N-terminus, the 125-residue chain is Small ribosomal subunit protein uS12 (125 aa).

A 3-methylthioaspartic acid modification is found at Asp-89. Residues Gly-106 to Ala-125 form a disordered region. Basic residues predominate over residues Ser-113–Ala-125.

This sequence belongs to the universal ribosomal protein uS12 family. In terms of assembly, part of the 30S ribosomal subunit. Contacts proteins S8 and S17. May interact with IF1 in the 30S initiation complex.

Its function is as follows. With S4 and S5 plays an important role in translational accuracy. Interacts with and stabilizes bases of the 16S rRNA that are involved in tRNA selection in the A site and with the mRNA backbone. Located at the interface of the 30S and 50S subunits, it traverses the body of the 30S subunit contacting proteins on the other side and probably holding the rRNA structure together. The combined cluster of proteins S8, S12 and S17 appears to hold together the shoulder and platform of the 30S subunit. The polypeptide is Small ribosomal subunit protein uS12 (Variovorax paradoxus (strain S110)).